Here is a 1611-residue protein sequence, read N- to C-terminus: Pentafunctional AROM polypeptide (1611 aa).

The tract at residues 1–391 (MSSSSADVLK…YEEKASVVAD (391 aa)) is 3-dehydroquinate synthase. Residues 47-49 (DTN), 84-87 (EGAK), 115-117 (GGV), and Asp120 contribute to the NAD(+) site. Arg131 is a 7-phospho-2-dehydro-3-deoxy-D-arabino-heptonate binding site. 140-141 (TT) contacts NAD(+). 7-phospho-2-dehydro-3-deoxy-D-arabino-heptonate contacts are provided by Asp147 and Lys153. Lys162 is an NAD(+) binding site. Position 163 (Asn163) interacts with 7-phospho-2-dehydro-3-deoxy-D-arabino-heptonate. NAD(+) contacts are provided by residues 180 to 183 (FLTT) and Asn191. Glu195 provides a ligand contact to Zn(2+). 7-phospho-2-dehydro-3-deoxy-D-arabino-heptonate contacts are provided by residues 195–198 (EVIK) and Lys257. Residue Glu267 is the Proton acceptor; for 3-dehydroquinate synthase activity of the active site. Residues 271-275 (RNLVN) and His278 each bind 7-phospho-2-dehydro-3-deoxy-D-arabino-heptonate. Residue His278 coordinates Zn(2+). His282 functions as the Proton acceptor; for 3-dehydroquinate synthase activity in the catalytic mechanism. Positions 294 and 363 each coordinate 7-phospho-2-dehydro-3-deoxy-D-arabino-heptonate. Residue His294 participates in Zn(2+) binding. The tract at residues 404-863 (VKAATPTKSP…WDDLQNKIGV (460 aa)) is EPSP synthase. Cys845 (for EPSP synthase activity) is an active-site residue. Positions 892 to 1093 (DRPIFLIGMR…SVGNPTSFLS (202 aa)) are shikimate kinase. 899-906 (GMRGAGKT) contacts ATP. A 3-dehydroquinase region spans residues 1094-1318 (LTFPDVTPAL…AAPGQLTARE (225 aa)). The active-site Proton acceptor; for 3-dehydroquinate dehydratase activity is His1220. The Schiff-base intermediate with substrate; for 3-dehydroquinate dehydratase activity role is filled by Lys1248. Residues 1331 to 1611 (AKKFVLFGSP…RKAVLDKYFA (281 aa)) form a shikimate dehydrogenase region.

It in the N-terminal section; belongs to the sugar phosphate cyclases superfamily. Dehydroquinate synthase family. The protein in the 2nd section; belongs to the EPSP synthase family. This sequence in the 3rd section; belongs to the shikimate kinase family. In the 4th section; belongs to the type-I 3-dehydroquinase family. It in the C-terminal section; belongs to the shikimate dehydrogenase family. Homodimer. It depends on Zn(2+) as a cofactor.

The protein resides in the cytoplasm. The catalysed reaction is 7-phospho-2-dehydro-3-deoxy-D-arabino-heptonate = 3-dehydroquinate + phosphate. It carries out the reaction 3-dehydroquinate = 3-dehydroshikimate + H2O. The enzyme catalyses shikimate + NADP(+) = 3-dehydroshikimate + NADPH + H(+). It catalyses the reaction shikimate + ATP = 3-phosphoshikimate + ADP + H(+). The catalysed reaction is 3-phosphoshikimate + phosphoenolpyruvate = 5-O-(1-carboxyvinyl)-3-phosphoshikimate + phosphate. It participates in metabolic intermediate biosynthesis; chorismate biosynthesis; chorismate from D-erythrose 4-phosphate and phosphoenolpyruvate: step 2/7. The protein operates within metabolic intermediate biosynthesis; chorismate biosynthesis; chorismate from D-erythrose 4-phosphate and phosphoenolpyruvate: step 3/7. Its pathway is metabolic intermediate biosynthesis; chorismate biosynthesis; chorismate from D-erythrose 4-phosphate and phosphoenolpyruvate: step 4/7. It functions in the pathway metabolic intermediate biosynthesis; chorismate biosynthesis; chorismate from D-erythrose 4-phosphate and phosphoenolpyruvate: step 5/7. It participates in metabolic intermediate biosynthesis; chorismate biosynthesis; chorismate from D-erythrose 4-phosphate and phosphoenolpyruvate: step 6/7. Its function is as follows. The AROM polypeptide catalyzes 5 consecutive enzymatic reactions in prechorismate polyaromatic amino acid biosynthesis. The chain is Pentafunctional AROM polypeptide from Cryptococcus neoformans var. neoformans serotype D (strain B-3501A) (Filobasidiella neoformans).